The chain runs to 315 residues: Methenyltetrahydromethanopterin cyclohydrolase (315 aa).

The protein belongs to the MCH family.

Its subcellular location is the cytoplasm. It catalyses the reaction 5,10-methenyl-5,6,7,8-tetrahydromethanopterin + H2O = N(5)-formyl-5,6,7,8-tetrahydromethanopterin + H(+). It functions in the pathway one-carbon metabolism; methanogenesis from CO(2); 5,10-methenyl-5,6,7,8-tetrahydromethanopterin from CO(2): step 3/3. In terms of biological role, catalyzes the reversible interconversion of 5-formyl-H(4)MPT to methenyl-H(4)MPT(+). The polypeptide is Methenyltetrahydromethanopterin cyclohydrolase (Methanoculleus marisnigri (strain ATCC 35101 / DSM 1498 / JR1)).